The following is a 109-amino-acid chain: Nucleoid-associated protein VC_1055 (109 aa).

The interval 1–22 is disordered; the sequence is MFGKGGMGNLMKQAQQMQERMQ.

The protein belongs to the YbaB/EbfC family. Homodimer.

It localises to the cytoplasm. Its subcellular location is the nucleoid. Its function is as follows. Binds to DNA and alters its conformation. May be involved in regulation of gene expression, nucleoid organization and DNA protection. The polypeptide is Nucleoid-associated protein VC_1055 (Vibrio cholerae serotype O1 (strain ATCC 39315 / El Tor Inaba N16961)).